The chain runs to 163 residues: Peptidyl-prolyl cis-trans isomerase (163 aa).

The region spanning 17 to 163 (KTAYATIKTN…IESVVFSSSL (147 aa)) is the PPIase cyclophilin-type domain.

This sequence belongs to the cyclophilin-type PPIase family.

The enzyme catalyses [protein]-peptidylproline (omega=180) = [protein]-peptidylproline (omega=0). PPIases accelerate the folding of proteins. It catalyzes the cis-trans isomerization of proline imidic peptide bonds in oligopeptides. The sequence is that of Peptidyl-prolyl cis-trans isomerase (ppiA) from Helicobacter pylori (strain ATCC 700392 / 26695) (Campylobacter pylori).